A 42-amino-acid chain; its full sequence is Large ribosomal subunit protein bL34c (42 aa).

This sequence belongs to the bacterial ribosomal protein bL34 family.

The protein resides in the plastid. The protein localises to the chloroplast. The protein is Large ribosomal subunit protein bL34c (rpl34) of Olisthodiscus luteus (Marine phytoflagellate).